The following is a 172-amino-acid chain: Inorganic pyrophosphatase (172 aa).

Substrate contacts are provided by Lys-26, Arg-40, and Tyr-52. The Mg(2+) site is built by Asp-62, Asp-67, and Asp-99. A substrate-binding site is contributed by Tyr-138.

The protein belongs to the PPase family. As to quaternary structure, homohexamer. Mg(2+) is required as a cofactor.

It localises to the cytoplasm. The catalysed reaction is diphosphate + H2O = 2 phosphate + H(+). Catalyzes the hydrolysis of inorganic pyrophosphate (PPi) forming two phosphate ions. This is Inorganic pyrophosphatase from Saccharolobus solfataricus (strain ATCC 35092 / DSM 1617 / JCM 11322 / P2) (Sulfolobus solfataricus).